Here is a 129-residue protein sequence, read N- to C-terminus: Small ribosomal subunit protein uS11 (129 aa).

This sequence belongs to the universal ribosomal protein uS11 family. In terms of assembly, part of the 30S ribosomal subunit. Interacts with proteins S7 and S18. Binds to IF-3.

Located on the platform of the 30S subunit, it bridges several disparate RNA helices of the 16S rRNA. Forms part of the Shine-Dalgarno cleft in the 70S ribosome. This Vibrio campbellii (strain ATCC BAA-1116) protein is Small ribosomal subunit protein uS11.